We begin with the raw amino-acid sequence, 305 residues long: Leucine-rich repeat-containing protein 25 (305 aa).

A signal peptide spans 1 to 20; the sequence is MGGTLAWTLLLPLLLRESDS. Residues 21–165 lie on the Extracellular side of the membrane; the sequence is LEPSCTVSSA…SCAPGLASAT (145 aa). 3 LRR repeats span residues 39–59, 62–83, and 86–107; these read SATCLNFSGLSLSLPHNQSLR, NVILLDLSGNGLRELPVTFFAH, and KLEVLNVLRNPLSRVDGALAAR. N-linked (GlcNAc...) asparagine glycosylation is found at Asn44 and Asn55. Asn130 and Asn148 each carry an N-linked (GlcNAc...) asparagine glycan. A helical transmembrane segment spans residues 166–186; that stretch reads IGAVVVSGCLLLGLAIAGPVL. Over 187-305 the chain is Cytoplasmic; that stretch reads AWRLWRCRVA…DEEEYVIPGH (119 aa). A disordered region spans residues 204–229; that stretch reads PWAAQDGPKPGLGLQPRYGSRSAPKP. The residue at position 284 (Tyr284) is a Phosphotyrosine.

In terms of assembly, interacts with RIGI. Interacts with SQSTM1. Interacts with p65/RELA; this interaction promotes the degradation of RELA through autophagy. As to expression, expressed in plasmacytoid dendritic cells (PDC), monocyte-derived dendritic cells (MDDC), granulocytes, monocytes, B-lymphocytes, peripheral blood leukocytes, spleen, bone marrow, and, to a lesser extent, lymph nodes, fetal liver, and appendix but not in thymus.

The protein localises to the membrane. It localises to the cytoplasm. Its function is as follows. Plays a role in the inhibition of RLR-mediated type I interferon signaling pathway by targeting RIGI for autophagic degradation. Interacts specifically with ISG15-associated RIGI to promote interaction between RIGI and the autophagic cargo receptor p62/SQSTM1 to mediate RIGI degradation via selective autophagy. Also plays a role in the inhibition of NF-kappa-B signaling pathway and inflammatory response by promoting the degradation of p65/RELA. The protein is Leucine-rich repeat-containing protein 25 (LRRC25) of Homo sapiens (Human).